The chain runs to 910 residues: Myelin regulatory factor-like protein (910 aa).

The NDT80 DNA-binding region spans Gly-142–Ser-405. Positions Arg-189–Thr-208 are disordered. The Peptidase S74 domain occupies Ser-451–Ile-559. The stretch at Gly-543–Leu-575 forms a coiled coil. Residues Leu-628–Ile-648 form a helical membrane-spanning segment. The tract at residues Leu-661–Ala-682 is disordered. Residues Pro-663–Ala-682 show a composition bias toward polar residues.

The protein belongs to the MRF family.

The protein resides in the membrane. This is Myelin regulatory factor-like protein (MYRFL) from Homo sapiens (Human).